Reading from the N-terminus, the 432-residue chain is Monoacylglycerol lipase ABHD2 (432 aa).

Over M1–E14 the chain is Cytoplasmic. The helical; Signal-anchor for type II membrane protein transmembrane segment at M15–V35 threads the bilayer. Residues R36 to S432 lie on the Extracellular side of the membrane. The region spanning T132–G383 is the AB hydrolase-1 domain. N141 carries N-linked (GlcNAc...) asparagine glycosylation. Catalysis depends on S212, which acts as the Nucleophile. N225 carries an N-linked (GlcNAc...) asparagine glycan. Residues D346 and H377 each act as charge relay system in the active site. The tract at residues P413 to S432 is disordered. Polar residues predominate over residues K418–S432. N-linked (GlcNAc...) asparagine glycosylation is present at N423.

It belongs to the AB hydrolase superfamily. AB hydrolase 4 family.

The protein resides in the cell membrane. It carries out the reaction Hydrolyzes glycerol monoesters of long-chain fatty acids.. The enzyme catalyses an acetyl ester + H2O = an aliphatic alcohol + acetate + H(+). The catalysed reaction is a triacylglycerol + H2O = a diacylglycerol + a fatty acid + H(+). It catalyses the reaction 2-(5Z,8Z,11Z,14Z-eicosatetraenoyl)-glycerol + H2O = glycerol + (5Z,8Z,11Z,14Z)-eicosatetraenoate + H(+). It carries out the reaction a butanoate ester + H2O = an aliphatic alcohol + butanoate + H(+). The enzyme catalyses hexadecanoate ester + H2O = an aliphatic alcohol + hexadecanoate + H(+). With respect to regulation, acylglycerol lipase activity is activated upon binding to progesterone. Progesterone-dependent acylglycerol lipase that catalyzes hydrolysis of endocannabinoid arachidonoylglycerol (AG) from cell membrane. Acts as a progesterone receptor: progesterone-binding activates the acylglycerol lipase activity, mediating degradation of 1-arachidonoylglycerol (1AG) and 2-arachidonoylglycerol (2AG) to glycerol and arachidonic acid (AA). Also displays an ester hydrolase activity against acetyl ester, butanoate ester and hexadecanoate ester. Plays a key role in sperm capacitation in response to progesterone by mediating degradation of 2AG, an inhibitor of the sperm calcium channel CatSper, leading to calcium influx via CatSper and sperm activation. May also play a role in smooth muscle cells migration. This Danio rerio (Zebrafish) protein is Monoacylglycerol lipase ABHD2 (abhd2a).